A 304-amino-acid chain; its full sequence is Aspartate carbamoyltransferase catalytic subunit (304 aa).

Carbamoyl phosphate is bound by residues Arg55 and Thr56. Position 84 (Lys84) interacts with L-aspartate. Positions 105, 133, and 136 each coordinate carbamoyl phosphate. The L-aspartate site is built by Arg165 and Arg226. The carbamoyl phosphate site is built by Leu265 and Pro266.

This sequence belongs to the aspartate/ornithine carbamoyltransferase superfamily. ATCase family. In terms of assembly, heterooligomer of catalytic and regulatory chains.

The catalysed reaction is carbamoyl phosphate + L-aspartate = N-carbamoyl-L-aspartate + phosphate + H(+). The protein operates within pyrimidine metabolism; UMP biosynthesis via de novo pathway; (S)-dihydroorotate from bicarbonate: step 2/3. In terms of biological role, catalyzes the condensation of carbamoyl phosphate and aspartate to form carbamoyl aspartate and inorganic phosphate, the committed step in the de novo pyrimidine nucleotide biosynthesis pathway. The chain is Aspartate carbamoyltransferase catalytic subunit from Methanothrix thermoacetophila (strain DSM 6194 / JCM 14653 / NBRC 101360 / PT) (Methanosaeta thermophila).